Consider the following 480-residue polypeptide: Histone deacetylase 1 (480 aa).

The tract at residues 9 to 321 is histone deacetylase; the sequence is RKVCYYYDGD…WTYETAVALD (313 aa). Residues glycine 27 and lysine 31 each contribute to the 1D-myo-inositol 1,4,5,6-tetrakisphosphate site. Histidine 141 is an active-site residue. Aspartate 176, histidine 178, and aspartate 264 together coordinate Zn(2+). Position 270 (arginine 270) interacts with 1D-myo-inositol 1,4,5,6-tetrakisphosphate. The disordered stretch occupies residues 376–480; the sequence is APGVQMQPIP…KGVKEETKST (105 aa). Residues 388 to 400 show a composition bias toward acidic residues; it reads AVQEDSGDEEEED. Residues 401 to 416 are compositionally biased toward basic and acidic residues; it reads PEKRISIRNSDKRISC. Over residues 417-427 the composition is skewed to acidic residues; it reads DEEFSDSEDEG. Positions 455 to 480 are enriched in basic and acidic residues; it reads KDEKEEEKAKEEKAEPKGVKEETKST.

This sequence belongs to the histone deacetylase family. HD type 1 subfamily. Requires Zn(2+) as cofactor.

The protein localises to the nucleus. It carries out the reaction N(6)-acetyl-L-lysyl-[histone] + H2O = L-lysyl-[histone] + acetate. The enzyme catalyses N(6)-acetyl-L-lysyl-[protein] + H2O = L-lysyl-[protein] + acetate. The catalysed reaction is N(6)-(2E)-butenoyl-L-lysyl-[protein] + H2O = (2E)-2-butenoate + L-lysyl-[protein]. It catalyses the reaction N(6)-[(S)-lactoyl]-L-lysyl-[protein] + H2O = (S)-lactate + L-lysyl-[protein]. Inositol tetraphosphate (1D-myo-inositol 1,4,5,6-tetrakisphosphate) may act as an intermolecular glue between HDAC1 and N-Cor repressor complex components. Its function is as follows. Histone deacetylase that catalyzes the deacetylation of lysine residues on the N-terminal part of the core histones (H2A, H2B, H3 and H4). Histone deacetylation gives a tag for epigenetic repression and plays an important role in transcriptional regulation, cell cycle progression and developmental events. Histone deacetylases act via the formation of large multiprotein complexes. Also functions as a deacetylase for non-histone proteins. In addition to protein deacetylase activity, also has protein-lysine deacylase activity: acts as a protein decrotonylase and delactylase by mediating decrotonylation ((2E)-butenoyl) and delactylation (lactoyl) of histones, respectively. The sequence is that of Histone deacetylase 1 (HDAC1) from Gallus gallus (Chicken).